A 365-amino-acid chain; its full sequence is Histidinol-phosphate aminotransferase 2 (365 aa).

Lys222 is modified (N6-(pyridoxal phosphate)lysine).

Belongs to the class-II pyridoxal-phosphate-dependent aminotransferase family. Histidinol-phosphate aminotransferase subfamily. Homodimer. It depends on pyridoxal 5'-phosphate as a cofactor.

It catalyses the reaction L-histidinol phosphate + 2-oxoglutarate = 3-(imidazol-4-yl)-2-oxopropyl phosphate + L-glutamate. The protein operates within amino-acid biosynthesis; L-histidine biosynthesis; L-histidine from 5-phospho-alpha-D-ribose 1-diphosphate: step 7/9. The polypeptide is Histidinol-phosphate aminotransferase 2 (hisC2) (Bordetella bronchiseptica (strain ATCC BAA-588 / NCTC 13252 / RB50) (Alcaligenes bronchisepticus)).